A 128-amino-acid chain; its full sequence is L-ectoine synthase (128 aa).

Belongs to the ectoine synthase family.

It catalyses the reaction (2S)-4-acetamido-2-aminobutanoate = L-ectoine + H2O. It functions in the pathway amine and polyamine biosynthesis; ectoine biosynthesis; L-ectoine from L-aspartate 4-semialdehyde: step 3/3. Its function is as follows. Catalyzes the circularization of gamma-N-acetyl-alpha,gamma-diaminobutyric acid (ADABA) to ectoine (1,4,5,6-tetrahydro-2-methyl-4-pyrimidine carboxylic acid), which is an excellent osmoprotectant. This chain is L-ectoine synthase, found in Vibrio atlanticus (strain LGP32) (Vibrio splendidus (strain Mel32)).